The chain runs to 138 residues: MSAQTQRLHPPFYDKRTQRVNSPFSLPAPKTQEKKYLCLLGTVDSVCAPLYDPPLAFTIPQAEVSHMNERNKLLARALYSCVPHVQGSDDYEDDFEDSDFQDGDFDDFEDEDGFDDDDDFEDDDFEYEDEDNDLDFDE.

The tract at residues 89 to 138 is disordered; sequence DDYEDDFEDSDFQDGDFDDFEDEDGFDDDDDFEDDDFEYEDEDNDLDFDE.

This is an uncharacterized protein from Treponema pallidum (strain Nichols).